Consider the following 351-residue polypeptide: Beta-1,4-xylosyltransferase IRX9 (351 aa).

Topologically, residues M1 to K16 are cytoplasmic. The helical; Signal-anchor for type II membrane protein transmembrane segment at A17–A36 threads the bilayer. At G37–T351 the chain is on the lumenal side. Residues N64 and N74 are each glycosylated (N-linked (GlcNAc...) asparagine). Residues S80 to N107 are disordered. A compositionally biased stretch (basic and acidic residues) spans E89–N107. N271 and N287 each carry an N-linked (GlcNAc...) asparagine glycan.

It belongs to the glycosyltransferase 43 family. Expressed in developing interfascicular fibers, primary and secondary xylem in stems and developing secondary xylem in roots.

The protein localises to the golgi apparatus membrane. It catalyses the reaction [(1-&gt;4)-beta-D-xylan](n) + UDP-alpha-D-xylose = [(1-&gt;4)-beta-D-xylan](n+1) + UDP + H(+). Its function is as follows. Involved in the synthesis of the hemicellulose glucuronoxylan, a major component of secondary cell walls. Xylan xylosyltransferase that acts cooperatively with IRX14 to achieve the successive addition of xylosyl residues during xylan backbone elongation. In Arabidopsis thaliana (Mouse-ear cress), this protein is Beta-1,4-xylosyltransferase IRX9.